The primary structure comprises 219 residues: N-(5'-phosphoribosyl)anthranilate isomerase (219 aa).

The protein belongs to the TrpF family.

The catalysed reaction is N-(5-phospho-beta-D-ribosyl)anthranilate = 1-(2-carboxyphenylamino)-1-deoxy-D-ribulose 5-phosphate. It participates in amino-acid biosynthesis; L-tryptophan biosynthesis; L-tryptophan from chorismate: step 3/5. In Dehalococcoides mccartyi (strain ATCC BAA-2266 / KCTC 15142 / 195) (Dehalococcoides ethenogenes (strain 195)), this protein is N-(5'-phosphoribosyl)anthranilate isomerase.